A 194-amino-acid chain; its full sequence is Lipoprotein signal peptidase (194 aa).

Helical transmembrane passes span threonine 75–serine 95 and threonine 97–aspartate 117. Active-site residues include aspartate 126 and aspartate 144. The chain crosses the membrane as a helical span at residues tyrosine 135–methionine 155.

Belongs to the peptidase A8 family.

The protein resides in the cell inner membrane. It carries out the reaction Release of signal peptides from bacterial membrane prolipoproteins. Hydrolyzes -Xaa-Yaa-Zaa-|-(S,diacylglyceryl)Cys-, in which Xaa is hydrophobic (preferably Leu), and Yaa (Ala or Ser) and Zaa (Gly or Ala) have small, neutral side chains.. Its pathway is protein modification; lipoprotein biosynthesis (signal peptide cleavage). In terms of biological role, this protein specifically catalyzes the removal of signal peptides from prolipoproteins. This chain is Lipoprotein signal peptidase, found in Rickettsia prowazekii (strain Madrid E).